A 137-amino-acid chain; its full sequence is MSRTFIMIKPDGVKNKHVGNILSRIEKEGFKILGLKYLKLSLEDAKQFYKVHSARPFYNDLCNYMSSGPIVAAALERDNAVLHWREVIGATDPKEAAAGTIRALYAESKEANAVHGSDSDDNAALEISFFFKGNELF.

Residues K9, F57, R85, T91, R102, and N112 each coordinate ATP. The active-site Pros-phosphohistidine intermediate is the H115.

The protein belongs to the NDK family. Homotetramer. Mg(2+) serves as cofactor.

It is found in the cytoplasm. It catalyses the reaction a 2'-deoxyribonucleoside 5'-diphosphate + ATP = a 2'-deoxyribonucleoside 5'-triphosphate + ADP. The catalysed reaction is a ribonucleoside 5'-diphosphate + ATP = a ribonucleoside 5'-triphosphate + ADP. In terms of biological role, major role in the synthesis of nucleoside triphosphates other than ATP. The ATP gamma phosphate is transferred to the NDP beta phosphate via a ping-pong mechanism, using a phosphorylated active-site intermediate. This chain is Nucleoside diphosphate kinase, found in Leptospira interrogans serogroup Icterohaemorrhagiae serovar Lai (strain 56601).